The primary structure comprises 309 residues: 4-diphosphocytidyl-2-C-methyl-D-erythritol kinase (309 aa).

The active site involves Lys28. Pro120 to Ser130 contacts ATP. Residue Asp162 is part of the active site.

It belongs to the GHMP kinase family. IspE subfamily.

It catalyses the reaction 4-CDP-2-C-methyl-D-erythritol + ATP = 4-CDP-2-C-methyl-D-erythritol 2-phosphate + ADP + H(+). It functions in the pathway isoprenoid biosynthesis; isopentenyl diphosphate biosynthesis via DXP pathway; isopentenyl diphosphate from 1-deoxy-D-xylulose 5-phosphate: step 3/6. Its function is as follows. Catalyzes the phosphorylation of the position 2 hydroxy group of 4-diphosphocytidyl-2C-methyl-D-erythritol. This chain is 4-diphosphocytidyl-2-C-methyl-D-erythritol kinase, found in Polaromonas sp. (strain JS666 / ATCC BAA-500).